Here is an 849-residue protein sequence, read N- to C-terminus: Ribosome biogenesis protein ERB1 (849 aa).

Residues 1 to 130 (MARNSIKKSP…PKDDDLSRIN (130 aa)) are disordered. Composition is skewed to acidic residues over residues 29-44 (EAEEDSNDEESEDELN) and 51-123 (ASDD…EPKD). A required for interaction with NOP7 region spans residues 286-405 (RFVPSKHEAK…LRQVPGYQDS (120 aa)). Residues 405 to 441 (SVRERFERSLDLYLAPRVRHNKLNIDPDSLIPDLPSP) form a required for interaction with YTM1 region. 2 WD repeats span residues 457 to 496 (GHTGKIRTISIDPQGLWLATGSDDGSVRIWEILTGRQVYK) and 505 to 545 (NNED…FDIE). Residues 569-581 (KISSQKEEDNKES) are compositionally biased toward basic and acidic residues. The interval 569-619 (KISSQKEEDNKESDNEDEDEEEDNDDDDDDDEPETSSTVEPKKEVAKWYPP) is disordered. The segment covering 582–602 (DNEDEDEEEDNDDDDDDDEPE) has biased composition (acidic residues). 5 WD repeats span residues 633 to 675 (QCRK…SQSP), 678 to 716 (KSKGIIMDAKFHPFKPQLFVASQRQIKIYDLAQQVLLKK), 719 to 758 (PGVRLLSTIDIHPRGDNLIAGSYDKRVLWHDLDLSATPYK), 762 to 802 (YHEK…DLMT), and 818 to 849 (INQIGILDLIWHPKEPWLFSAGADGTARLWTT).

This sequence belongs to the WD repeat BOP1/ERB1 family. Component of the NOP7 complex, composed of ERB1, NOP7 and YTM1. The complex is held together by ERB1, which interacts with NOP7 via its N-terminal domain and with YTM1 via a high-affinity interaction between the seven-bladed beta-propeller domains of the 2 proteins. The NOP7 complex associates with the 66S pre-ribosome.

It localises to the nucleus. Its subcellular location is the nucleolus. The protein resides in the nucleoplasm. Functionally, component of the NOP7 complex, which is required for maturation of the 25S and 5.8S ribosomal RNAs and formation of the 60S ribosome. This chain is Ribosome biogenesis protein ERB1, found in Candida albicans (strain SC5314 / ATCC MYA-2876) (Yeast).